Here is a 211-residue protein sequence, read N- to C-terminus: Redox-sensing transcriptional repressor Rex (211 aa).

A DNA-binding region (H-T-H motif) is located at residues 17-56 (LYYRFVSSLKSKGIDRVNSKAISDALQIDSATIRRDFSYF). 91–96 (GVGNLG) is a binding site for NAD(+).

It belongs to the transcriptional regulatory Rex family. Homodimer.

It localises to the cytoplasm. Modulates transcription in response to changes in cellular NADH/NAD(+) redox state. In Staphylococcus aureus (strain Mu3 / ATCC 700698), this protein is Redox-sensing transcriptional repressor Rex.